A 475-amino-acid polypeptide reads, in one-letter code: ATP synthase subunit beta (475 aa).

Residue 148-155 (GGAGVGKT) participates in ATP binding.

This sequence belongs to the ATPase alpha/beta chains family. F-type ATPases have 2 components, CF(1) - the catalytic core - and CF(0) - the membrane proton channel. CF(1) has five subunits: alpha(3), beta(3), gamma(1), delta(1), epsilon(1). CF(0) has three main subunits: a(1), b(2) and c(9-12). The alpha and beta chains form an alternating ring which encloses part of the gamma chain. CF(1) is attached to CF(0) by a central stalk formed by the gamma and epsilon chains, while a peripheral stalk is formed by the delta and b chains.

Its subcellular location is the cell inner membrane. The enzyme catalyses ATP + H2O + 4 H(+)(in) = ADP + phosphate + 5 H(+)(out). Produces ATP from ADP in the presence of a proton gradient across the membrane. The catalytic sites are hosted primarily by the beta subunits. In Psychrobacter sp. (strain PRwf-1), this protein is ATP synthase subunit beta.